A 166-amino-acid polypeptide reads, in one-letter code: Flagellar assembly factor FliW (166 aa).

The protein belongs to the FliW family. In terms of assembly, interacts with translational regulator CsrA and flagellin(s).

Its subcellular location is the cytoplasm. Its function is as follows. Acts as an anti-CsrA protein, binds CsrA and prevents it from repressing translation of its target genes, one of which is flagellin. Binds to flagellin and participates in the assembly of the flagellum. This is Flagellar assembly factor FliW from Desulfovibrio desulfuricans (strain ATCC 27774 / DSM 6949 / MB).